Consider the following 367-residue polypeptide: Putative methylthioribose-1-phosphate isomerase (367 aa).

Residues 65 to 67 (RGA), arginine 106, and glutamine 218 contribute to the substrate site. Aspartate 259 acts as the Proton donor in catalysis. 269-270 (NK) serves as a coordination point for substrate.

It belongs to the eIF-2B alpha/beta/delta subunits family. MtnA subfamily.

The catalysed reaction is 5-(methylsulfanyl)-alpha-D-ribose 1-phosphate = 5-(methylsulfanyl)-D-ribulose 1-phosphate. Functionally, catalyzes the interconversion of methylthioribose-1-phosphate (MTR-1-P) into methylthioribulose-1-phosphate (MTRu-1-P). The polypeptide is Putative methylthioribose-1-phosphate isomerase (Sulfolobus acidocaldarius (strain ATCC 33909 / DSM 639 / JCM 8929 / NBRC 15157 / NCIMB 11770)).